A 327-amino-acid polypeptide reads, in one-letter code: Protoheme IX farnesyltransferase (327 aa).

Transmembrane regions (helical) follow at residues 55–75, 101–121, 124–144, 152–172, 180–200, 237–257, and 278–298; these read LVCTLGGGALAAAAAGVLNCL, AAFVGAVSCTLAAAALLVSGV, LAAGLSLLGLCSYVLLYTALL, IVVGGVAGAIPPLVGAAAATG, WLFALVMVWTPAHFWALALLL, FLGIWALPEGGALYGLLILPF, and AKGLFRWSILYLFGVCLLLVM.

Belongs to the UbiA prenyltransferase family. Protoheme IX farnesyltransferase subfamily.

The protein resides in the cell inner membrane. The catalysed reaction is heme b + (2E,6E)-farnesyl diphosphate + H2O = Fe(II)-heme o + diphosphate. It functions in the pathway porphyrin-containing compound metabolism; heme O biosynthesis; heme O from protoheme: step 1/1. Its function is as follows. Converts heme B (protoheme IX) to heme O by substitution of the vinyl group on carbon 2 of heme B porphyrin ring with a hydroxyethyl farnesyl side group. This chain is Protoheme IX farnesyltransferase, found in Synechococcus sp. (strain CC9311).